We begin with the raw amino-acid sequence, 211 residues long: uncharacterized protein (211 aa).

The disordered stretch occupies residues 1–43; sequence MRPEVGREPAALQPRQRPRSDHQLHRSPFTVPPRTPACRSPGP.

This is an uncharacterized protein from Homo sapiens (Human).